We begin with the raw amino-acid sequence, 87 residues long: U3-theraphotoxin-Hhn1o (87 aa).

A signal peptide spans 1 to 24; the sequence is MVNMKASMFLTFAGLVLLFVVCYA. Positions 25–52 are excised as a propeptide; sequence SESEEKEFPKEMLSSIFAVDNDFKQEER. Intrachain disulfides connect Cys54/Cys67 and Cys61/Cys72.

Belongs to the neurotoxin 10 (Hwtx-1) family. 51 (Hntx-8) subfamily. Hntx-8 sub-subfamily. Expressed by the venom gland.

Its subcellular location is the secreted. In terms of biological role, ion channel inhibitor. This is U3-theraphotoxin-Hhn1o from Cyriopagopus hainanus (Chinese bird spider).